The chain runs to 509 residues: MGVQAGLFGMLGFLGVALGGSPALRWYRTSCHLTKAVPGNPLGYLSFLAKDAQGLALIHARWDAHRRLQSCSWEDEPELTAAYGALCAHETAWGSFIHTPGPELQRALATLQSQWEACRALEESPAGARKKRAAGQSGVPGGGHQREKRGWTMPGTLWCGVGDSAGNSSELGVFQGPDLCCREHDRCPQNISPLQYNYGIRNYRFHTISHCDCDTRFQQCLQNQHDSISDIVGVAFFNVLEIPCFVLEEQEACVAWYWWGGCRMYGTVPLARLQPRTFYNASWSSRATSPTPSSRSPAPPKPRQKQHLRKGPPHQKGSKRPSKANTTALQDPMVSPRLDVAPTGLQGPQGGLKPQGARWVCRSFRRHLDQCEHQIGPREIEFQLLNSAQEPLFHCNCTRRLARFLRLHSPPEVTNMLWELLGTTCFKLAPPLDCVEGKNCSRDPRAIRVSARHLRRLQQRRHQLQDKGTDERQPWPSEPLRGPMSFYNQCLQLTQAARRPDRQQKSWSQ.

Residues 1–19 form the signal peptide; it reads MGVQAGLFGMLGFLGVALG. Positions 123 to 149 are disordered; that stretch reads ESPAGARKKRAAGQSGVPGGGHQREKR. Residues 150–291 form a phospholipase A2-like region; the sequence is GWTMPGTLWC…SWSSRATSPT (142 aa). 3 residues coordinate Ca(2+): Trp-158, Gly-160, and Gly-162. Cystine bridges form between Cys-159–Cys-181, Cys-180–Cys-220, Cys-187–Cys-213, and Cys-211–Cys-244. An N-linked (GlcNAc...) asparagine glycan is attached at Asn-167. His-184 is a catalytic residue. Asp-185 is a Ca(2+) binding site. Residue Asp-214 is part of the active site. N-linked (GlcNAc...) asparagine glycosylation occurs at Asn-280. Positions 283–354 are disordered; that stretch reads WSSRATSPTP…LQGPQGGLKP (72 aa). Residues 284–296 are compositionally biased toward low complexity; it reads SSRATSPTPSSRS. Over residues 302–322 the composition is skewed to basic residues; it reads PRQKQHLRKGPPHQKGSKRPS. N-linked (GlcNAc...) asparagine glycans are attached at residues Asn-325, Asn-396, and Asn-439. The segment at 458-482 is disordered; the sequence is QQRRHQLQDKGTDERQPWPSEPLRG. Over residues 463–473 the composition is skewed to basic and acidic residues; sequence QLQDKGTDERQ.

This sequence belongs to the phospholipase A2 family. Ca(2+) serves as cofactor. Post-translationally, N-glycosylation does not affect the catalytic activity, but is required for proper secretion. A nonglycosylated form is observed in several cell types. In several cell types, the N- and C-termini are cleaved off. Expressed in kidney, heart, liver, and skeletal muscle. Also present in placenta and peripheral blood leukocytes. Not detected in colon, thymus, spleen and small intestine. In lung, expressed in bronchial epithelial cells and alveolar macrophages, but scarcely detected in alveolar epithelium, arterial walls and interstitial fibroblasts (at protein level). In joints of osteoarthritis and rheumatoid arthritis, expressed in endothelial cells (at protein level). In normal heart, detected in some vessels. In myocardial tissues with acute infarction, expressed in vascular endothelial cells adjacent to cardiomyocytes and those in lesions with granulation. Expression in cardiomyocytes is scarce (at protein level). In uterus, breast and colon cancers, detected in tumor cells and neighboring microvascular endothelium, but not in normal glandular tissues (at protein level). Expressed in dermal resting mast cells (at protein level) and pulmonary mast cells. Expressed in neuronal fibers (at protein level). Highly expressed in dorsal root ganglia neurons (at protein level). Expressed in Purkinje cells in cerebellum (at protein level). In stomach is preferentially expressed in neuronal fibers and in microvascular endothelium. Sparsely expressed in normal aorta (at protein level). Highly expressed in macrophages and smooth muscle cells in aorta with atheroma.

The protein resides in the secreted. It localises to the cell membrane. Its subcellular location is the cytoplasm. It is found in the cytoskeleton. The protein localises to the microtubule organizing center. The protein resides in the centrosome. It localises to the centriole. Its subcellular location is the recycling endosome. It carries out the reaction a 1,2-diacyl-sn-glycero-3-phosphocholine + H2O = a 1-acyl-sn-glycero-3-phosphocholine + a fatty acid + H(+). The catalysed reaction is 1-hexadecanoyl-2-(9Z,12Z-octadecadienoyl)-sn-glycero-3-phosphocholine + H2O = (9Z,12Z)-octadecadienoate + 1-hexadecanoyl-sn-glycero-3-phosphocholine + H(+). The enzyme catalyses 1-hexadecanoyl-2-(5Z,8Z,11Z,14Z-eicosatetraenoyl)-sn-glycero-3-phosphocholine + H2O = 1-hexadecanoyl-sn-glycero-3-phosphocholine + (5Z,8Z,11Z,14Z)-eicosatetraenoate + H(+). It catalyses the reaction 1-hexadecanoyl-2-(9Z,12Z-octadecadienoyl)-sn-glycero-3-phosphoethanolamine + H2O = 1-hexadecanoyl-sn-glycero-3-phosphoethanolamine + (9Z,12Z)-octadecadienoate + H(+). It carries out the reaction 1-hexadecanoyl-2-(5Z,8Z,11Z,14Z-eicosatetraenoyl)-sn-glycero-3-phosphoethanolamine + H2O = 1-hexadecanoyl-sn-glycero-3-phosphoethanolamine + (5Z,8Z,11Z,14Z)-eicosatetraenoate + H(+). With respect to regulation, arachidonic acid release is markedly increased by glypican, a glycosylphosphatidylinositol-anchored heparan sulfate proteoglycan. Functionally, secretory calcium-dependent phospholipase A2 that primarily targets extracellular phospholipids. Hydrolyzes the ester bond of the fatty acyl group attached at sn-2 position of phospholipids without apparent head group selectivity. Contributes to phospholipid remodeling of low-density lipoprotein (LDL) and high-density lipoprotein (HDL) particles. Hydrolyzes LDL phospholipids releasing unsaturated fatty acids that regulate macrophage differentiation toward foam cells. May act in an autocrine and paracrine manner. Secreted by immature mast cells, acts on nearby fibroblasts upstream to PTDGS to synthesize prostaglandin D2 (PGD2), which in turn promotes mast cell maturation and degranulation via PTGDR. Secreted by epididymal epithelium, acts on immature sperm cells within the duct, modulating the degree of unsaturation of the fatty acyl components of phosphatidylcholines required for acrosome assembly and sperm cell motility. Facilitates the replacement of fatty acyl chains in phosphatidylcholines in sperm membranes from omega-6 and omega-9 to omega-3 polyunsaturated fatty acids (PUFAs). Coupled to lipoxygenase pathway, may process omega-6 PUFAs to generate oxygenated lipid mediators in the male reproductive tract. At pericentrosomal preciliary compartment, negatively regulates ciliogenesis likely by regulating endocytotic recycling of ciliary membrane protein. Coupled to cyclooxygenase pathway provides arachidonate to generate prostaglandin E2 (PGE2), a potent immunomodulatory lipid in inflammation and tumorigenesis. At colonic epithelial barrier, preferentially hydrolyzes phospholipids having arachidonate and docosahexaenoate at sn-2 position, contributing to the generation of oxygenated metabolites involved in colonic stem cell homeostasis. Releases C16:0 and C18:0 lysophosphatidylcholine subclasses from neuron plasma membranes and promotes neurite outgrowth and neuron survival. In Homo sapiens (Human), this protein is Group 3 secretory phospholipase A2.